Reading from the N-terminus, the 270-residue chain is Putative phosphoenolpyruvate synthase regulatory protein (270 aa).

Position 150-157 (150-157 (GVSRCGKT)) interacts with ADP.

Belongs to the pyruvate, phosphate/water dikinase regulatory protein family. PSRP subfamily.

It catalyses the reaction [pyruvate, water dikinase] + ADP = [pyruvate, water dikinase]-phosphate + AMP + H(+). It carries out the reaction [pyruvate, water dikinase]-phosphate + phosphate + H(+) = [pyruvate, water dikinase] + diphosphate. Functionally, bifunctional serine/threonine kinase and phosphorylase involved in the regulation of the phosphoenolpyruvate synthase (PEPS) by catalyzing its phosphorylation/dephosphorylation. In Shewanella sp. (strain ANA-3), this protein is Putative phosphoenolpyruvate synthase regulatory protein.